The sequence spans 322 residues: MKIVFLDFEKGIEEFEAKIEQLRFAQDNSALDISAEIARLQTKSLGLTKSVYAKLTPWQISQVARHPQRPYTLDYVQHLFTDFEELHGDRNFADDQAIVGGLARFNGQTVMIIGHQKGRDTKEKIHRNFGMPKPEGYRKALRLMRLAEKFSIPLITFIDTPGAYPGIDAEERGQSEAIGKNLYVMAGLRIPIICVIIGEGGSGGALAIAVGDTSLMLQYSTYSVISPEGCASILWKSADKASDAAEILGITADRLKEMGLIDSIIPEPIGGAHRDYPVVMQSVKQTLQESLRKLQDIPLETLLQKRLDRLLGYGRFKINQPD.

The CoA carboxyltransferase C-terminal domain maps to 30-293; that stretch reads ALDISAEIAR…KQTLQESLRK (264 aa).

It belongs to the AccA family. Acetyl-CoA carboxylase is a heterohexamer composed of biotin carboxyl carrier protein (AccB), biotin carboxylase (AccC) and two subunits each of ACCase subunit alpha (AccA) and ACCase subunit beta (AccD).

The protein resides in the cytoplasm. It catalyses the reaction N(6)-carboxybiotinyl-L-lysyl-[protein] + acetyl-CoA = N(6)-biotinyl-L-lysyl-[protein] + malonyl-CoA. It functions in the pathway lipid metabolism; malonyl-CoA biosynthesis; malonyl-CoA from acetyl-CoA: step 1/1. In terms of biological role, component of the acetyl coenzyme A carboxylase (ACC) complex. First, biotin carboxylase catalyzes the carboxylation of biotin on its carrier protein (BCCP) and then the CO(2) group is transferred by the carboxyltransferase to acetyl-CoA to form malonyl-CoA. This is Acetyl-coenzyme A carboxylase carboxyl transferase subunit alpha from Nitrosomonas europaea (strain ATCC 19718 / CIP 103999 / KCTC 2705 / NBRC 14298).